Here is a 401-residue protein sequence, read N- to C-terminus: Argininosuccinate synthase (401 aa).

Residues 9–17 and Ala36 each bind ATP; that span reads AYSGGLDTS. 2 residues coordinate L-citrulline: Tyr87 and Ser92. Gly117 is an ATP binding site. Residues Thr119, Asn123, and Asp124 each contribute to the L-aspartate site. Position 123 (Asn123) interacts with L-citrulline. Positions 127, 176, 185, 261, and 273 each coordinate L-citrulline.

This sequence belongs to the argininosuccinate synthase family. Type 1 subfamily. In terms of assembly, homotetramer.

Its subcellular location is the cytoplasm. It catalyses the reaction L-citrulline + L-aspartate + ATP = 2-(N(omega)-L-arginino)succinate + AMP + diphosphate + H(+). It functions in the pathway amino-acid biosynthesis; L-arginine biosynthesis; L-arginine from L-ornithine and carbamoyl phosphate: step 2/3. The protein is Argininosuccinate synthase of Syntrophobacter fumaroxidans (strain DSM 10017 / MPOB).